We begin with the raw amino-acid sequence, 117 residues long: uncharacterized protein (117 aa).

This is an uncharacterized protein from Bacillus subtilis (strain 168).